Consider the following 376-residue polypeptide: Chaperone protein DnaJ (376 aa).

One can recognise a J domain in the interval 5-70; sequence DYYEILGVSK…QKRAAYDQYG (66 aa). The CR-type zinc finger occupies 131–209; sequence GVTKEIRIPT…CHGHGRVERS (79 aa). C144, C147, C161, C164, C183, C186, C197, and C200 together coordinate Zn(2+). 4 CXXCXGXG motif repeats span residues 144 to 151, 161 to 168, 183 to 190, and 197 to 204; these read CDVCHGSG, CPTCHGSG, CPHCQGRG, and CNKCHGHG.

It belongs to the DnaJ family. Homodimer. It depends on Zn(2+) as a cofactor.

It localises to the cytoplasm. In terms of biological role, participates actively in the response to hyperosmotic and heat shock by preventing the aggregation of stress-denatured proteins and by disaggregating proteins, also in an autonomous, DnaK-independent fashion. Unfolded proteins bind initially to DnaJ; upon interaction with the DnaJ-bound protein, DnaK hydrolyzes its bound ATP, resulting in the formation of a stable complex. GrpE releases ADP from DnaK; ATP binding to DnaK triggers the release of the substrate protein, thus completing the reaction cycle. Several rounds of ATP-dependent interactions between DnaJ, DnaK and GrpE are required for fully efficient folding. Also involved, together with DnaK and GrpE, in the DNA replication of plasmids through activation of initiation proteins. The chain is Chaperone protein DnaJ from Shigella flexneri serotype 5b (strain 8401).